We begin with the raw amino-acid sequence, 235 residues long: Orotidine 5'-phosphate decarboxylase (235 aa).

Residues aspartate 12, lysine 34, 61–70 (DMKLLDIDNT), threonine 116, arginine 177, glutamine 186, and arginine 207 each bind substrate. The active-site Proton donor is lysine 63.

This sequence belongs to the OMP decarboxylase family. Type 1 subfamily. In terms of assembly, homodimer.

The catalysed reaction is orotidine 5'-phosphate + H(+) = UMP + CO2. The protein operates within pyrimidine metabolism; UMP biosynthesis via de novo pathway; UMP from orotate: step 2/2. Catalyzes the decarboxylation of orotidine 5'-monophosphate (OMP) to uridine 5'-monophosphate (UMP). This Agrobacterium fabrum (strain C58 / ATCC 33970) (Agrobacterium tumefaciens (strain C58)) protein is Orotidine 5'-phosphate decarboxylase.